Reading from the N-terminus, the 149-residue chain is Glutamate mutase sigma subunit (149 aa).

The 138-residue stretch at 3–140 (KATLVIGVIG…AHDINQRHDV (138 aa)) folds into the B12-binding domain. Residues 13-17 (ADCHA), histidine 16, 61-63 (SSI), and 93-97 (NLVVG) contribute to the adenosylcob(III)alamin site.

It belongs to the methylaspartate mutase GlmS subunit family. Heterotetramer composed of 2 epsilon subunits (GlmE) and 2 sigma subunits (GlmS). GlmE exists as a homodimer and GlmS as a monomer. Requires adenosylcob(III)alamin as cofactor.

It carries out the reaction (2S,3S)-3-methyl-L-aspartate = L-glutamate. It participates in amino-acid degradation; L-glutamate degradation via mesaconate pathway; acetate and pyruvate from L-glutamate: step 1/4. Functionally, catalyzes the carbon skeleton rearrangement of L-glutamate to L-threo-3-methylaspartate ((2S,3S)-3-methylaspartate). The sequence is that of Glutamate mutase sigma subunit from Escherichia coli O157:H7.